The chain runs to 103 residues: MYAVIKTGGKQHRVVVNELLKVELLKAETGETIKFEDVLMIVDGETVKIGQPIVEGASVEVEVVEHGRGEKIRIVKHNRRKHYHKEQGHRQWYTLLKIKAINA.

The protein belongs to the bacterial ribosomal protein bL21 family. In terms of assembly, part of the 50S ribosomal subunit. Contacts protein L20.

In terms of biological role, this protein binds to 23S rRNA in the presence of protein L20. The protein is Large ribosomal subunit protein bL21 of Psychrobacter arcticus (strain DSM 17307 / VKM B-2377 / 273-4).